Here is a 75-residue protein sequence, read N- to C-terminus: Metallothionein-like protein 1 (75 aa).

Belongs to the metallothionein superfamily. Type 15 family.

In terms of biological role, metallothioneins have a high content of cysteine residues that bind various heavy metals. The chain is Metallothionein-like protein 1 (MT1B) from Trifolium repens (Creeping white clover).